The chain runs to 1058 residues: Carbamoyl phosphate synthase large chain (1058 aa).

A carboxyphosphate synthetic domain region spans residues 1–401 (MPKRKDIQKI…SLLKACRSLE (401 aa)). 12 residues coordinate ATP: Arg-129, Arg-169, Gly-175, Gly-176, Arg-208, Ile-210, Glu-215, Gly-241, Ile-242, His-243, Gln-284, and Glu-298. The ATP-grasp 1 domain maps to 133 to 327 (KQLMQELDQP…IAKLAAKIAV (195 aa)). Positions 284, 298, and 300 each coordinate Mg(2+). Mn(2+)-binding residues include Gln-284, Glu-298, and Asn-300. The segment at 402 to 546 (IGVCHNEMTS…YSTYELENES (145 aa)) is oligomerization domain. Residues 547–929 (VQSNKESILV…ALYKAFEANN (383 aa)) are carbamoyl phosphate synthetic domain. The 191-residue stretch at 671–861 (EKALKELGIP…MAQIATKLIL (191 aa)) folds into the ATP-grasp 2 domain. Residues Arg-707, Ser-746, Ile-748, Glu-752, Gly-777, Val-778, His-779, Ser-780, Gln-820, and Glu-832 each coordinate ATP. Residues Gln-820, Glu-832, and Asn-834 each contribute to the Mg(2+) site. Residues Gln-820, Glu-832, and Asn-834 each coordinate Mn(2+). An MGS-like domain is found at 930–1058 (SHLSEFGQIV…ESRCFNIEAI (129 aa)). Residues 930 to 1058 (SHLSEFGQIV…ESRCFNIEAI (129 aa)) form an allosteric domain region.

The protein belongs to the CarB family. Composed of two chains; the small (or glutamine) chain promotes the hydrolysis of glutamine to ammonia, which is used by the large (or ammonia) chain to synthesize carbamoyl phosphate. Tetramer of heterodimers (alpha,beta)4. It depends on Mg(2+) as a cofactor. The cofactor is Mn(2+).

The enzyme catalyses hydrogencarbonate + L-glutamine + 2 ATP + H2O = carbamoyl phosphate + L-glutamate + 2 ADP + phosphate + 2 H(+). It catalyses the reaction hydrogencarbonate + NH4(+) + 2 ATP = carbamoyl phosphate + 2 ADP + phosphate + 2 H(+). Its pathway is amino-acid biosynthesis; L-arginine biosynthesis; carbamoyl phosphate from bicarbonate: step 1/1. The protein operates within pyrimidine metabolism; UMP biosynthesis via de novo pathway; (S)-dihydroorotate from bicarbonate: step 1/3. In terms of biological role, large subunit of the glutamine-dependent carbamoyl phosphate synthetase (CPSase). CPSase catalyzes the formation of carbamoyl phosphate from the ammonia moiety of glutamine, carbonate, and phosphate donated by ATP, constituting the first step of 2 biosynthetic pathways, one leading to arginine and/or urea and the other to pyrimidine nucleotides. The large subunit (synthetase) binds the substrates ammonia (free or transferred from glutamine from the small subunit), hydrogencarbonate and ATP and carries out an ATP-coupled ligase reaction, activating hydrogencarbonate by forming carboxy phosphate which reacts with ammonia to form carbamoyl phosphate. This is Carbamoyl phosphate synthase large chain from Streptococcus pyogenes serotype M18 (strain MGAS8232).